The following is a 360-amino-acid chain: UDP-N-acetylglucosamine--N-acetylmuramyl-(pentapeptide) pyrophosphoryl-undecaprenol N-acetylglucosamine transferase (360 aa).

Residues 14-16 (TGG), Asn-131, Arg-167, Ser-195, Ile-249, and Gln-294 contribute to the UDP-N-acetyl-alpha-D-glucosamine site.

The protein belongs to the glycosyltransferase 28 family. MurG subfamily.

It is found in the cell inner membrane. It carries out the reaction di-trans,octa-cis-undecaprenyl diphospho-N-acetyl-alpha-D-muramoyl-L-alanyl-D-glutamyl-meso-2,6-diaminopimeloyl-D-alanyl-D-alanine + UDP-N-acetyl-alpha-D-glucosamine = di-trans,octa-cis-undecaprenyl diphospho-[N-acetyl-alpha-D-glucosaminyl-(1-&gt;4)]-N-acetyl-alpha-D-muramoyl-L-alanyl-D-glutamyl-meso-2,6-diaminopimeloyl-D-alanyl-D-alanine + UDP + H(+). Its pathway is cell wall biogenesis; peptidoglycan biosynthesis. Cell wall formation. Catalyzes the transfer of a GlcNAc subunit on undecaprenyl-pyrophosphoryl-MurNAc-pentapeptide (lipid intermediate I) to form undecaprenyl-pyrophosphoryl-MurNAc-(pentapeptide)GlcNAc (lipid intermediate II). In Polaromonas naphthalenivorans (strain CJ2), this protein is UDP-N-acetylglucosamine--N-acetylmuramyl-(pentapeptide) pyrophosphoryl-undecaprenol N-acetylglucosamine transferase.